The primary structure comprises 134 residues: DNA-binding protein H-NS (134 aa).

Residues 111–116 mediate DNA binding; it reads QGRTLA.

The protein belongs to the histone-like protein H-NS family. In terms of assembly, homodimer that oligomerizes on DNA into higher-order complexes that form bridges between disparate regions of DNA compacting it. Interacts with YmoA and other similar proteins.

The protein resides in the cytoplasm. The protein localises to the nucleoid. Its function is as follows. A DNA-binding protein implicated in transcriptional repression and chromosome organization and compaction. Binds nucleation sites in AT-rich DNA and bridges them, forming higher-order nucleoprotein complexes and condensing the chromosome. As many horizontally transferred genes are AT-rich, it plays a central role in silencing foreign genes. A subset of genes are repressed by H-NS in association with other proteins. This Proteus vulgaris protein is DNA-binding protein H-NS (hns).